A 381-amino-acid polypeptide reads, in one-letter code: MNKATANERKKLRLLLVASRKHLSRGDLRSLIRFLESEDCGFEIKLQFSDPKEQPELLELHRLVAIPALIKLDPQPKQIFAGTSILEQLKNWLPRWEQEDILISSGLGINLRQKESENGRTRNELLLEDENLVLRQENETLSNQIESQERLLRMVAHELRTPLSAAKLALQSQALGQIDLIKLQEVVKRRLEEIESLSKDLLEVGTTRWEALFNPQEANLANIAAEVILELEKFWLSRGIGINTDIPADLPNVFADQSRMKQVLLNLIENALKFSNDGDTVEITMLHRTNQWVQISVSDKGPGIPEEEQQRIFLDRVRLPQTSNETSGFGIGLSVCRRIVEVHGGKIWVVSQPGEGSCFYFTVPVWDKRNKSLEPLTLTQG.

In terms of domain architecture, Histidine kinase spans 154–367 (MVAHELRTPL…CFYFTVPVWD (214 aa)). The residue at position 157 (H157) is a Phosphohistidine; by autocatalysis.

As to quaternary structure, homooligomerizes. Interacts with KaiC. Participates in the KaiBC complex, whose core is composed of a KaiC homohexamer and 6 KaiB.

It catalyses the reaction ATP + protein L-histidine = ADP + protein N-phospho-L-histidine.. Its function is as follows. Member of the two-component regulatory system SasA/RpaA involved in genome-wide circadian gene expression. One of several clock output pathways. Participates in the Kai clock protein complex, the main circadian regulator in cyanobacteria, via its interaction with KaiC. KaiC enhances the autophosphorylation activity of SasA, which then transfers its phosphate group to RpaA to activate it. In addition to its output function, recruits fold-shifted KaiB (KaiB(fs)) to KaiC to cooperatively form the KaiB(6):KaiC(6) complex (independent of SasA kinase activity). Required for robustness of the circadian rhythm of gene expression and is involved in clock output, also required for adaptation to light/dark cycles. The sequence is that of Adaptive-response sensory kinase SasA from Prochlorococcus marinus (strain SARG / CCMP1375 / SS120).